A 450-amino-acid polypeptide reads, in one-letter code: MADRLFGTDGLRGTVNTYPMTVDVALRLGLAAGIRFRRGQHQHKVVIGKDTRLSGYMFESALTAGLCAAGMHVIMTGPLPTPAISFLTRSMRADLGVVISASHNPFQDNGIKFFDADGYKLPDMAEDEIAAMVLDAGFSWPYPDSRGVGRATKIEDAGGRYIVYTKNCFPAHLTLSGLRIVVDCANGASYKVAPLALEELGAEVFRIGTGPDGTNINEHCGSLHPDVVAAKVREVRADIGLALDGDADRLIVVDERGVVLDGDQIMALCAQAMMARGELPGNLLVATAMSNMALELFMRDHGGQLLRTKVGDRYVMEAMRREGAMLGGEQSGHLIFHRYSTTGDGLLAALQILRIMREKERPLSELAGLLTPFPQKLINVRVEKRLPFEERPAIGEAVAQVEKELGGRGRVLLRYSGTEALCRVMVEGEHEDRVRTYAEDLAQVVERELR.

The Phosphoserine intermediate role is filled by Ser102. Residues Ser102, Asp244, Asp246, and Asp248 each coordinate Mg(2+). Position 102 is a phosphoserine (Ser102).

Belongs to the phosphohexose mutase family. Mg(2+) is required as a cofactor. Activated by phosphorylation.

It carries out the reaction alpha-D-glucosamine 1-phosphate = D-glucosamine 6-phosphate. Functionally, catalyzes the conversion of glucosamine-6-phosphate to glucosamine-1-phosphate. The chain is Phosphoglucosamine mutase from Desulfovibrio desulfuricans (strain ATCC 27774 / DSM 6949 / MB).